The following is a 508-amino-acid chain: Drug efflux pump JefA (508 aa).

The next 14 membrane-spanning stretches (helical) occupy residues 9 to 29, 46 to 66, 75 to 95, 104 to 124, 136 to 156, 163 to 183, 194 to 214, 222 to 242, 265 to 285, 297 to 317, 328 to 348, 354 to 374, 399 to 419, and 479 to 499; these read VLAT…VNVA, WAVA…ALLG, FVFG…PVSL, IQGL…SHSF, NWMA…GLMV, SVFL…LVGV, LDWV…YTII, QSAG…WLFV, SVLI…MVIT, LHAG…SLLA, LPVL…AISM, VALV…TPLL, LGGI…LGAA, and GIKL…VLGW.

It belongs to the major facilitator superfamily.

The protein localises to the cell inner membrane. Functionally, involved in resistance to ethambutol and isoniazid. The polypeptide is Drug efflux pump JefA (Mycobacterium tuberculosis (strain CDC 1551 / Oshkosh)).